A 95-amino-acid chain; its full sequence is Aspartyl/glutamyl-tRNA(Asn/Gln) amidotransferase subunit C (95 aa).

It belongs to the GatC family. As to quaternary structure, heterotrimer of A, B and C subunits.

The enzyme catalyses L-glutamyl-tRNA(Gln) + L-glutamine + ATP + H2O = L-glutaminyl-tRNA(Gln) + L-glutamate + ADP + phosphate + H(+). It catalyses the reaction L-aspartyl-tRNA(Asn) + L-glutamine + ATP + H2O = L-asparaginyl-tRNA(Asn) + L-glutamate + ADP + phosphate + 2 H(+). In terms of biological role, allows the formation of correctly charged Asn-tRNA(Asn) or Gln-tRNA(Gln) through the transamidation of misacylated Asp-tRNA(Asn) or Glu-tRNA(Gln) in organisms which lack either or both of asparaginyl-tRNA or glutaminyl-tRNA synthetases. The reaction takes place in the presence of glutamine and ATP through an activated phospho-Asp-tRNA(Asn) or phospho-Glu-tRNA(Gln). The sequence is that of Aspartyl/glutamyl-tRNA(Asn/Gln) amidotransferase subunit C from Dechloromonas aromatica (strain RCB).